The primary structure comprises 412 residues: Serine hydroxymethyltransferase (412 aa).

(6S)-5,6,7,8-tetrahydrofolate contacts are provided by residues Leu-120 and 124–126; that span reads GHL. Lys-228 carries the post-translational modification N6-(pyridoxal phosphate)lysine. 353–355 is a (6S)-5,6,7,8-tetrahydrofolate binding site; that stretch reads SPF.

Belongs to the SHMT family. Homodimer. Pyridoxal 5'-phosphate serves as cofactor.

The protein localises to the cytoplasm. It carries out the reaction (6R)-5,10-methylene-5,6,7,8-tetrahydrofolate + glycine + H2O = (6S)-5,6,7,8-tetrahydrofolate + L-serine. Its pathway is one-carbon metabolism; tetrahydrofolate interconversion. The protein operates within amino-acid biosynthesis; glycine biosynthesis; glycine from L-serine: step 1/1. Catalyzes the reversible interconversion of serine and glycine with tetrahydrofolate (THF) serving as the one-carbon carrier. This reaction serves as the major source of one-carbon groups required for the biosynthesis of purines, thymidylate, methionine, and other important biomolecules. Also exhibits THF-independent aldolase activity toward beta-hydroxyamino acids, producing glycine and aldehydes, via a retro-aldol mechanism. The protein is Serine hydroxymethyltransferase of Lachnoclostridium phytofermentans (strain ATCC 700394 / DSM 18823 / ISDg) (Clostridium phytofermentans).